The following is a 225-amino-acid chain: NAD(P)H-quinone oxidoreductase subunit K, chloroplastic (225 aa).

Residues cysteine 43, cysteine 44, cysteine 108, and cysteine 139 each contribute to the [4Fe-4S] cluster site.

It belongs to the complex I 20 kDa subunit family. As to quaternary structure, NDH is composed of at least 16 different subunits, 5 of which are encoded in the nucleus. Requires [4Fe-4S] cluster as cofactor.

It is found in the plastid. It localises to the chloroplast thylakoid membrane. The catalysed reaction is a plastoquinone + NADH + (n+1) H(+)(in) = a plastoquinol + NAD(+) + n H(+)(out). It catalyses the reaction a plastoquinone + NADPH + (n+1) H(+)(in) = a plastoquinol + NADP(+) + n H(+)(out). Its function is as follows. NDH shuttles electrons from NAD(P)H:plastoquinone, via FMN and iron-sulfur (Fe-S) centers, to quinones in the photosynthetic chain and possibly in a chloroplast respiratory chain. The immediate electron acceptor for the enzyme in this species is believed to be plastoquinone. Couples the redox reaction to proton translocation, and thus conserves the redox energy in a proton gradient. This is NAD(P)H-quinone oxidoreductase subunit K, chloroplastic from Illicium oligandrum (Star anise).